Consider the following 242-residue polypeptide: 2-C-methyl-D-erythritol 4-phosphate cytidylyltransferase (242 aa).

The protein belongs to the IspD/TarI cytidylyltransferase family. IspD subfamily.

It carries out the reaction 2-C-methyl-D-erythritol 4-phosphate + CTP + H(+) = 4-CDP-2-C-methyl-D-erythritol + diphosphate. The protein operates within isoprenoid biosynthesis; isopentenyl diphosphate biosynthesis via DXP pathway; isopentenyl diphosphate from 1-deoxy-D-xylulose 5-phosphate: step 2/6. Catalyzes the formation of 4-diphosphocytidyl-2-C-methyl-D-erythritol from CTP and 2-C-methyl-D-erythritol 4-phosphate (MEP). The polypeptide is 2-C-methyl-D-erythritol 4-phosphate cytidylyltransferase (Shewanella loihica (strain ATCC BAA-1088 / PV-4)).